The following is an 888-amino-acid chain: DNA mismatch repair protein MutS (888 aa).

Position 641–648 (641–648) interacts with ATP; it reads GPNMAGKS.

Belongs to the DNA mismatch repair MutS family.

Functionally, this protein is involved in the repair of mismatches in DNA. It is possible that it carries out the mismatch recognition step. This protein has a weak ATPase activity. This is DNA mismatch repair protein MutS from Rickettsia bellii (strain OSU 85-389).